We begin with the raw amino-acid sequence, 309 residues long: Porphobilinogen deaminase (309 aa).

C243 carries the post-translational modification S-(dipyrrolylmethanemethyl)cysteine.

The protein belongs to the HMBS family. As to quaternary structure, monomer. It depends on dipyrromethane as a cofactor.

It catalyses the reaction 4 porphobilinogen + H2O = hydroxymethylbilane + 4 NH4(+). It functions in the pathway porphyrin-containing compound metabolism; protoporphyrin-IX biosynthesis; coproporphyrinogen-III from 5-aminolevulinate: step 2/4. Functionally, tetrapolymerization of the monopyrrole PBG into the hydroxymethylbilane pre-uroporphyrinogen in several discrete steps. The polypeptide is Porphobilinogen deaminase (Deinococcus geothermalis (strain DSM 11300 / CIP 105573 / AG-3a)).